Reading from the N-terminus, the 230-residue chain is UPF0173 metal-dependent hydrolase Rsph17025_2229 (230 aa).

This sequence belongs to the UPF0173 family.

This Cereibacter sphaeroides (strain ATCC 17025 / ATH 2.4.3) (Rhodobacter sphaeroides) protein is UPF0173 metal-dependent hydrolase Rsph17025_2229.